A 440-amino-acid chain; its full sequence is Xaa-Pro dipeptidase (440 aa).

Residues Asp246, Asp257, His337, Glu382, and Glu421 each coordinate Mn(2+).

The protein belongs to the peptidase M24B family. Bacterial-type prolidase subfamily. The cofactor is Mn(2+).

It catalyses the reaction Xaa-L-Pro dipeptide + H2O = an L-alpha-amino acid + L-proline. Splits dipeptides with a prolyl residue in the C-terminal position. This Aeromonas hydrophila subsp. hydrophila (strain ATCC 7966 / DSM 30187 / BCRC 13018 / CCUG 14551 / JCM 1027 / KCTC 2358 / NCIMB 9240 / NCTC 8049) protein is Xaa-Pro dipeptidase.